Here is a 276-residue protein sequence, read N- to C-terminus: CDP-diacylglycerol--serine O-phosphatidyltransferase (276 aa).

The segment at 1 to 21 (MVESDEDFAPQEFPHTDTDVI) is disordered. Residues Ser-4, Ser-34, Ser-42, Ser-46, Ser-47, and Ser-50 each carry the phosphoserine modification. Helical transmembrane passes span 82-102 (MADYITMLNGFSGFYSIVSCL), 163-183 (IAFAIGFQTTFDVMILSFFVL), 210-230 (YFEGLPMPTTLALVLGMAYCV), and 248-268 (QILEFHPIILVFFIHGCGMIS).

It belongs to the CDP-alcohol phosphatidyltransferase class-I family. The cofactor is Mn(2+). It depends on Mg(2+) as a cofactor.

It localises to the microsome membrane. It is found in the endoplasmic reticulum membrane. The protein localises to the mitochondrion outer membrane. The catalysed reaction is a CDP-1,2-diacyl-sn-glycerol + L-serine = a 1,2-diacyl-sn-glycero-3-phospho-L-serine + CMP + H(+). The protein operates within phospholipid metabolism; phosphatidylethanolamine biosynthesis; phosphatidylethanolamine from CDP-diacylglycerol: step 1/2. Functionally, catalyzes the synthesis of phosphatidylserine (PtdSer). The sequence is that of CDP-diacylglycerol--serine O-phosphatidyltransferase (CHO1) from Saccharomyces cerevisiae (strain ATCC 204508 / S288c) (Baker's yeast).